A 147-amino-acid chain; its full sequence is uncharacterized protein (147 aa).

In terms of domain architecture, HTH LytTR-type spans 44–147 (LVGYIDKEIH…LKSIKERLSI (104 aa)).

Its subcellular location is the cytoplasm. This is an uncharacterized protein from Staphylococcus aureus (strain COL).